Consider the following 239-residue polypeptide: tRNA (guanine-N(1)-)-methyltransferase (239 aa).

S-adenosyl-L-methionine-binding positions include G108 and 128–133; that span reads VGNFIV.

This sequence belongs to the RNA methyltransferase TrmD family. Homodimer.

The protein resides in the cytoplasm. The enzyme catalyses guanosine(37) in tRNA + S-adenosyl-L-methionine = N(1)-methylguanosine(37) in tRNA + S-adenosyl-L-homocysteine + H(+). Functionally, specifically methylates guanosine-37 in various tRNAs. This Helicobacter hepaticus (strain ATCC 51449 / 3B1) protein is tRNA (guanine-N(1)-)-methyltransferase.